Consider the following 222-residue polypeptide: MDSDSWSDRLASASRRYQLDFLSRSDNFLGFEEIEGEDDFREEYACPFCSDYFDIVSLCCHIDEDHPMDAKNGVCPICAVKVSSDMIAHITLQHANMFKVTRKRKSRRGGAQSMLSILKREFPDGNFQSLFEGTSRAVSSSSASIAADPLLSSFISPMADDFFISESSLCADTSSAKKTLNQSLPERNVEKQSLSAEDHREKLKQSEFVQGILSSMILEDGL.

S116 is subject to Phosphoserine.

Belongs to the Di19 family. Post-translationally, phosphorylated in vitro by CPK3 or CPK11. In terms of tissue distribution, expressed in seedlings, roots, leaves, stems, flowers and siliques.

The protein localises to the nucleus. The chain is Protein DEHYDRATION-INDUCED 19 homolog 6 (DI19-6) from Arabidopsis thaliana (Mouse-ear cress).